We begin with the raw amino-acid sequence, 243 residues long: Adenylate kinase 4 (243 aa).

Position 40 to 45 (40 to 45) interacts with ATP; it reads GSGKGT. Residues 60–89 are NMP; that stretch reads ATGDMLRAAVAAKTPLGVKAKEAMDKGELV. AMP contacts are provided by residues Thr-61, Arg-66, 87–89, 115–118, and Gln-122; these read ELV and GFPR. The tract at residues 156–193 is LID; sequence GRWIHPSSGRSYHTKFAPPKVPGVDDVTGEPLIQRKDD. Arg-157 contributes to the ATP binding site. Arg-190 and Arg-201 together coordinate AMP.

The protein belongs to the adenylate kinase family.

The protein localises to the cytoplasm. The catalysed reaction is AMP + ATP = 2 ADP. Catalyzes the reversible transfer of the terminal phosphate group between ATP and AMP. Plays an important role in cellular energy homeostasis and in adenine nucleotide metabolism. The protein is Adenylate kinase 4 (ADK-B) of Oryza sativa subsp. japonica (Rice).